A 390-amino-acid polypeptide reads, in one-letter code: Pyruvate dehydrogenase E1 component subunit alpha, somatic form, mitochondrial (390 aa).

A mitochondrion-targeting transit peptide spans 1 to 29 (MRKMLAAVSRVLAGAAQKPASRVLVASRN). At lysine 63 the chain carries N6-acetyllysine; alternate. Lysine 63 carries the N6-succinyllysine; alternate modification. Residues histidine 92, tyrosine 118, arginine 119, alanine 157, glycine 165, valine 167, aspartate 196, glycine 197, alanine 198, asparagine 225, and tyrosine 227 each contribute to the pyruvate site. Positions 118 and 119 each coordinate thiamine diphosphate. Thiamine diphosphate contacts are provided by glycine 165, valine 167, aspartate 196, glycine 197, alanine 198, and asparagine 225. Aspartate 196 is a Mg(2+) binding site. Mg(2+) is bound by residues asparagine 225 and tyrosine 227. A Phosphoserine; by PDK1 modification is found at serine 232. The residue at position 244 (lysine 244) is an N6-acetyllysine; alternate. Lysine 244 carries the post-translational modification N6-succinyllysine; alternate. Lysine 267 carries the post-translational modification N6-acetyllysine. Residue lysine 277 is modified to N6-succinyllysine. Residue histidine 292 participates in thiamine diphosphate binding. Serine 293 carries the phosphoserine; by PDK1, PDK2, PDK3 and PDK4 modification. A Phosphoserine modification is found at serine 295. Serine 300 is subject to Phosphoserine; by PDK1, PDK2, PDK3 and PDK4. Residue tyrosine 301 is modified to Phosphotyrosine. Lysine 313 carries the post-translational modification N6-acetyllysine; alternate. At lysine 313 the chain carries N6-succinyllysine; alternate. 2 positions are modified to N6-acetyllysine: lysine 321 and lysine 336. Lysine 385 carries the N6-succinyllysine modification.

In terms of assembly, heterotetramer of two PDHA1 and two PDHB subunits. The heterotetramer interacts with DLAT, and is part of the multimeric pyruvate dehydrogenase complex that contains multiple copies of pyruvate dehydrogenase (E1), dihydrolipoamide acetyltransferase (DLAT, E2) and lipoamide dehydrogenase (DLD, E3). These subunits are bound to an inner core composed of about 48 DLAT and 12 PDHX molecules. Thiamine diphosphate serves as cofactor. It depends on Mg(2+) as a cofactor. In terms of processing, phosphorylation at Ser-232, Ser-293 and Ser-300 by PDK family kinases inactivates the enzyme; for this phosphorylation at a single site is sufficient. Phosphorylation at Ser-293 interferes with access to active site, and thereby inactivates the enzyme. Dephosphorylation at all three sites, i.e. at Ser-232, Ser-293 and Ser-300, is required for reactivation. Acetylation alters the phosphorylation pattern. Deacetylated by SIRT3. As to expression, in all tissues, but in very low amount in testis.

It is found in the mitochondrion matrix. The enzyme catalyses N(6)-[(R)-lipoyl]-L-lysyl-[protein] + pyruvate + H(+) = N(6)-[(R)-S(8)-acetyldihydrolipoyl]-L-lysyl-[protein] + CO2. With respect to regulation, pyruvate dehydrogenase activity is inhibited by phosphorylation of PDHA1; it is reactivated by dephosphorylation. Functionally, the pyruvate dehydrogenase complex catalyzes the overall conversion of pyruvate to acetyl-CoA and CO(2), and thereby links the glycolytic pathway to the tricarboxylic cycle. This Rattus norvegicus (Rat) protein is Pyruvate dehydrogenase E1 component subunit alpha, somatic form, mitochondrial (Pdha1).